Reading from the N-terminus, the 339-residue chain is Cytochrome c biogenesis protein CcsA (339 aa).

Helical transmembrane passes span 6–26 (LEHI…LVFW), 37–57 (IGSL…GLLL), 71–91 (LYES…VSEI), 97–117 (WLGI…TVGL), 142–162 (MMIP…ALLI), 247–267 (IISL…VWVN), and 281–299 (TWAL…IRMI).

The protein belongs to the CcmF/CycK/Ccl1/NrfE/CcsA family. May interact with Ccs1.

Its subcellular location is the plastid. It localises to the chloroplast thylakoid membrane. Its function is as follows. Required during biogenesis of c-type cytochromes (cytochrome c6 and cytochrome f) at the step of heme attachment. The polypeptide is Cytochrome c biogenesis protein CcsA (Anthoceros angustus (Hornwort)).